Here is a 229-residue protein sequence, read N- to C-terminus: Peptidase E (229 aa).

Active-site charge relay system residues include Ser-120, Asp-135, and His-157.

It belongs to the peptidase S51 family.

The protein resides in the cytoplasm. The enzyme catalyses Dipeptidase E catalyzes the hydrolysis of dipeptides Asp-|-Xaa. It does not act on peptides with N-terminal Glu, Asn or Gln, nor does it cleave isoaspartyl peptides.. Hydrolyzes dipeptides containing N-terminal aspartate residues. May play a role in allowing the cell to use peptide aspartate to spare carbon otherwise required for the synthesis of the aspartate family of amino acids. This chain is Peptidase E, found in Salmonella typhi.